Consider the following 425-residue polypeptide: Kynureninase (425 aa).

Residues L105, T106, 133-136, D218, H221, and Y243 contribute to the pyridoxal 5'-phosphate site; that span reads FPSD. K244 carries the N6-(pyridoxal phosphate)lysine modification. Pyridoxal 5'-phosphate-binding residues include W274 and N302.

Belongs to the kynureninase family. In terms of assembly, homodimer. Pyridoxal 5'-phosphate is required as a cofactor.

The catalysed reaction is L-kynurenine + H2O = anthranilate + L-alanine + H(+). It catalyses the reaction 3-hydroxy-L-kynurenine + H2O = 3-hydroxyanthranilate + L-alanine + H(+). Its pathway is amino-acid degradation; L-kynurenine degradation; L-alanine and anthranilate from L-kynurenine: step 1/1. It participates in cofactor biosynthesis; NAD(+) biosynthesis; quinolinate from L-kynurenine: step 2/3. Its function is as follows. Catalyzes the cleavage of L-kynurenine (L-Kyn) and L-3-hydroxykynurenine (L-3OHKyn) into anthranilic acid (AA) and 3-hydroxyanthranilic acid (3-OHAA), respectively. The polypeptide is Kynureninase (Flavobacterium johnsoniae (strain ATCC 17061 / DSM 2064 / JCM 8514 / BCRC 14874 / CCUG 350202 / NBRC 14942 / NCIMB 11054 / UW101) (Cytophaga johnsonae)).